Consider the following 351-residue polypeptide: Basic salivary proline-rich protein 3 (351 aa).

Positions M1–A16 are cleaved as a signal peptide. Q17 carries the pyrrolidone carboxylic acid modification. The disordered stretch occupies residues Q17–Q351. The span at N20–V31 shows a compositional bias: polar residues. A Phosphoserine modification is found at S24. 12 tandem repeats follow at residues P53–P73, R74–P94, R95–P115, R116–P136, R137–P157, R158–P178, H179–P199, R200–P220, R221–P241, R242–P261, R263–P283, and H284–P304. Positions P53–P304 are 12 X 21 AA tandem repeats of [RHP]-P-G-K-P-[EQ]-G-[PQS]-P-[PS]-Q-[GE]-G-N-[QK]-[SP]-[QR]-[GR]-P-P-P. A glycan (N-linked (GlcNAc...) asparagine) is linked at N66. The span at G70–Q84 shows a compositional bias: pro residues. A glycan (N-linked (GlcNAc...) asparagine) is linked at N87. S89 carries O-linked (Hex) serine glycosylation. Residues P99–Q111 are compositionally biased toward low complexity. A glycan (N-linked (GlcNAc...) asparagine) is linked at N108. Residues G112–Q126 are compositionally biased toward pro residues. An N-linked (GlcNAc...) asparagine glycan is attached at N129. The segment covering G133–Q147 has biased composition (pro residues). An N-linked (GlcNAc...) asparagine glycan is attached at N150. Composition is skewed to pro residues over residues G154–Q168 and G175–Q189. An N-linked (GlcNAc...) asparagine glycan is attached at N192. A compositionally biased stretch (pro residues) spans G196 to Q210. N-linked (GlcNAc...) asparagine glycans are attached at residues N213 and N234. 3 stretches are compositionally biased toward pro residues: residues G217–Q252, G259–P270, and Q279–Q351. N-linked (Hex) asparagine; atypical glycosylation occurs at N297.

Post-translationally, N- and O-glycosylated; contains about 50% carbohydrate. This is composed of highly fucosylated N-linked saccharides, the major structure is a biantennary asialosaccharide containing 2 fucose residues on one antenna and an unsubstituted terminal lactosamine sequence on the other. The Gram-negative bacterium F.nucleatum binds to carbohydrates containing unsubstituted GalBeta1,4GlcNAc residues. N-glycosylation on Asn-87 is prevalent in head and neck cancer patients. In terms of processing, proteolytically cleaved at the tripeptide Xaa-Pro-Gln, where Xaa in the P(3) position is mostly lysine. The endoprotease may be of microbial origin. Besides on the N-terminal of mature PRB3, pyroglutamate formation found on at least Gln-67, Gln-88, Gln-256 and Gln-337.

It localises to the secreted. Its function is as follows. Acts as a receptor for the Gram-negative bacterium F.nucleatum. The polypeptide is Basic salivary proline-rich protein 3 (PRB3) (Homo sapiens (Human)).